Reading from the N-terminus, the 484-residue chain is Transmembrane protein 161B (484 aa).

A helical membrane pass occupies residues 108 to 128 (LVDFTVAATVVYLITELYFCV). Asn136 is a glycosylation site (N-linked (GlcNAc...) asparagine). Transmembrane regions (helical) follow at residues 137–157 (ISVV…FSLT) and 170–190 (SLCI…LIVT). A glycan (N-linked (GlcNAc...) asparagine) is linked at Asn204. Transmembrane regions (helical) follow at residues 229 to 249 (FKLI…FPGL), 266 to 286 (VTQT…LLWV), 368 to 388 (VFYY…MLLH), and 456 to 476 (LSFF…FGLF).

Belongs to the TMEM161 family.

It is found in the cell membrane. Essential for maintaining normal cardiac rhythm in the developing heart and for neonatal survival. Inhibits potassium and calcium currents in the cardiomyocytes, this assists in timely action potential repolarization and thereby maintains normal cardiac rhythm. This chain is Transmembrane protein 161B (tmem161b), found in Danio rerio (Zebrafish).